Here is a 192-residue protein sequence, read N- to C-terminus: Casparian strip membrane protein 1 (192 aa).

The Cytoplasmic segment spans residues 1–30 (MSTTVDVPESSNVAKGKAIAVARPGGWKKG). Residues 31–51 (LAIMDFILRLGGIAASLGAAA) traverse the membrane as a helical segment. The Extracellular segment spans residues 52–80 (TMGTSDQTLPFFTQFFQFEASYDSFTTFQ). A helical membrane pass occupies residues 81–101 (FFVITMALVAGYLVLSLPFSV). Residues 102 to 113 (VAIIRPHAPGPR) lie on the Cytoplasmic side of the membrane. Residues 114 to 134 (LFLIILDTVFLTLATASGASA) traverse the membrane as a helical segment. At 135–166 (AAIVYLAHNGNQDSNWLAICNQFGDFCAQTSG) the chain is on the extracellular side. A helical membrane pass occupies residues 167–187 (AVVASFVAVVILVLLVIMSAL). The Cytoplasmic portion of the chain corresponds to 188–192 (ALRRH).

It belongs to the Casparian strip membrane proteins (CASP) family. As to quaternary structure, homodimer and heterodimers.

It is found in the cell membrane. In terms of biological role, regulates membrane-cell wall junctions and localized cell wall deposition. Required for establishment of the Casparian strip membrane domain (CSD) and the subsequent formation of Casparian strips, a cell wall modification of the root endodermis that determines an apoplastic barrier between the intraorganismal apoplasm and the extraorganismal apoplasm and prevents lateral diffusion. The protein is Casparian strip membrane protein 1 of Vigna unguiculata (Cowpea).